We begin with the raw amino-acid sequence, 419 residues long: 3-isopropylmalate dehydratase large subunit (419 aa).

[4Fe-4S] cluster is bound by residues Cys300, Cys360, and Cys363.

The protein belongs to the aconitase/IPM isomerase family. LeuC type 2 subfamily. In terms of assembly, heterodimer of LeuC and LeuD. It depends on [4Fe-4S] cluster as a cofactor.

The enzyme catalyses (2R,3S)-3-isopropylmalate = (2S)-2-isopropylmalate. It functions in the pathway amino-acid biosynthesis; L-leucine biosynthesis; L-leucine from 3-methyl-2-oxobutanoate: step 2/4. Catalyzes the isomerization between 2-isopropylmalate and 3-isopropylmalate, via the formation of 2-isopropylmaleate. The protein is 3-isopropylmalate dehydratase large subunit of Acetivibrio thermocellus (strain ATCC 27405 / DSM 1237 / JCM 9322 / NBRC 103400 / NCIMB 10682 / NRRL B-4536 / VPI 7372) (Clostridium thermocellum).